We begin with the raw amino-acid sequence, 629 residues long: tRNA uridine 5-carboxymethylaminomethyl modification enzyme MnmG (629 aa).

FAD-binding positions include 14–19 (GAGHAG), V126, and S181. Residue 273–287 (GPRYCPSIEDKVVRF) participates in NAD(+) binding. Q370 provides a ligand contact to FAD.

This sequence belongs to the MnmG family. In terms of assembly, homodimer. Heterotetramer of two MnmE and two MnmG subunits. Requires FAD as cofactor.

The protein localises to the cytoplasm. NAD-binding protein involved in the addition of a carboxymethylaminomethyl (cmnm) group at the wobble position (U34) of certain tRNAs, forming tRNA-cmnm(5)s(2)U34. The protein is tRNA uridine 5-carboxymethylaminomethyl modification enzyme MnmG of Geobacillus kaustophilus (strain HTA426).